Consider the following 214-residue polypeptide: Large ribosomal subunit protein bL25 (214 aa).

The segment at 179 to 214 (VPPTQGPSEAEIEEVEAGDADTPEPEVVGEKEEDEE) is disordered. Positions 188–202 (AEIEEVEAGDADTPE) are enriched in acidic residues.

It belongs to the bacterial ribosomal protein bL25 family. CTC subfamily. In terms of assembly, part of the 50S ribosomal subunit; part of the 5S rRNA/L5/L18/L25 subcomplex. Contacts the 5S rRNA. Binds to the 5S rRNA independently of L5 and L18.

In terms of biological role, this is one of the proteins that binds to the 5S RNA in the ribosome where it forms part of the central protuberance. The protein is Large ribosomal subunit protein bL25 of Staphylococcus carnosus (strain TM300).